We begin with the raw amino-acid sequence, 109 residues long: UPF0102 protein Suden_1901 (109 aa).

Belongs to the UPF0102 family.

This Sulfurimonas denitrificans (strain ATCC 33889 / DSM 1251) (Thiomicrospira denitrificans (strain ATCC 33889 / DSM 1251)) protein is UPF0102 protein Suden_1901.